Reading from the N-terminus, the 805-residue chain is MTTEEAAAQYGADSIKVLKGLDAVRKRPGMYIGDTDDGSGLHHMVYEVVDNAIDEALAGHATKVQVILNADGSVTVTDDGRGIPVDMHEGEGVSAAEVIMTQLHAGGKFDQNSYKVSGGLHGVGVSVVNALSDWLELLIHRNGKVHQMRFERGDAVTSLKVTGDSPVRTEGPKAGETLTGTEVTFFPSKDTFAFIEFDRKTLEHRLRELAFLNSGVTIWFKDHRDVEPWEEKLFYEGGIEAFVRHLDKAKTPLLKAPIAVKGVKDKVEIDLALWWNDSYHEQMLCFTNNIPQRDGGTHLSAFRAALTRIITSYAESSGILKKEKVSLGGEDSREGLTCVLSVKVPDPKFSSQTKDKLVSSEVRPAVEGLVSEGLSTWFEEHPNEAKAIVTKIAEAAAAREAARKARELTRRKSALDITSLPGKLADCSERDPAKSEIFIVEGDSAGGSAKQARNRDNQAVLPLRGKILNVERARFDKMLSSDQIGTLITALGAGIGRDDFNPDKVRYHKIVLMTDADVDGAHIRTLLLTFFYRQMPELIERGYIYIAQPPLYKASKGKSSRYLKDDAEMDAFLVDEGVDGAELDLASGERMTGQDLLALVQTCRSAKANIDRLAARAPATAIEQAALSGLLGESPNAAAAATRLDLYAEEGDGPWSGERGDTGFVFSRVRRGVSERVVLDDVLLHAADARRLAERAVKLTEIFSGRAIFRRKDKSTTVRGPLDLVNAVLDAGRKGLTIQRYKGLGEMNPDQLWETTLDAEARTLLQVRVNHADDADDMFSRLMGDLVEPRREFIQENALDAEVDV.

The region spanning 435-550 (SEIFIVEGDS…RGYIYIAQPP (116 aa)) is the Toprim domain. Mg(2+) is bound by residues glutamate 441, aspartate 515, and aspartate 517.

It belongs to the type II topoisomerase GyrB family. Heterotetramer, composed of two GyrA and two GyrB chains. In the heterotetramer, GyrA contains the active site tyrosine that forms a transient covalent intermediate with DNA, while GyrB binds cofactors and catalyzes ATP hydrolysis. Requires Mg(2+) as cofactor. The cofactor is Mn(2+). Ca(2+) serves as cofactor.

Its subcellular location is the cytoplasm. The enzyme catalyses ATP-dependent breakage, passage and rejoining of double-stranded DNA.. Functionally, a type II topoisomerase that negatively supercoils closed circular double-stranded (ds) DNA in an ATP-dependent manner to modulate DNA topology and maintain chromosomes in an underwound state. Negative supercoiling favors strand separation, and DNA replication, transcription, recombination and repair, all of which involve strand separation. Also able to catalyze the interconversion of other topological isomers of dsDNA rings, including catenanes and knotted rings. Type II topoisomerases break and join 2 DNA strands simultaneously in an ATP-dependent manner. This Caulobacter vibrioides (strain ATCC 19089 / CIP 103742 / CB 15) (Caulobacter crescentus) protein is DNA gyrase subunit B.